A 319-amino-acid polypeptide reads, in one-letter code: Zinc finger protein-like 1 homolog (319 aa).

The segment at 1–43 adopts a B box-type; degenerate zinc-finger fold; the sequence is MGLCKCPKRKVTNLFCYEHRVNVCEFCLVDNHPNCVVQSYLNW. An RING-type; atypical zinc finger spans residues 53-101; sequence CSLCHTTLTQGETIRLNCLHLLHWRCFDDWAASFPPTTAPAGYRCPCCS. The disordered stretch occupies residues 212–232; the sequence is ESSSDTRPLLRQDRDADNEEN. Residues 219–232 are compositionally biased toward basic and acidic residues; the sequence is PLLRQDRDADNEEN. A helical membrane pass occupies residues 264 to 284; it reads KMAIFVMFLALLALITIITVL.

This sequence belongs to the ZFPL1 family.

Its subcellular location is the membrane. The chain is Zinc finger protein-like 1 homolog from Caenorhabditis briggsae.